The primary structure comprises 389 residues: Acetate kinase (389 aa).

Asparagine 9 provides a ligand contact to Mg(2+). Lysine 16 is an ATP binding site. Residue arginine 77 participates in substrate binding. The Proton donor/acceptor role is filled by aspartate 134. ATP contacts are provided by residues histidine 194–glycine 198, aspartate 268–arginine 270, and glycine 316–asparagine 320. Glutamate 370 contributes to the Mg(2+) binding site.

Belongs to the acetokinase family. Homodimer. Requires Mg(2+) as cofactor. The cofactor is Mn(2+).

It is found in the cytoplasm. It carries out the reaction acetate + ATP = acetyl phosphate + ADP. It participates in metabolic intermediate biosynthesis; acetyl-CoA biosynthesis; acetyl-CoA from acetate: step 1/2. Its function is as follows. Catalyzes the formation of acetyl phosphate from acetate and ATP. Can also catalyze the reverse reaction. This Mycolicibacterium vanbaalenii (strain DSM 7251 / JCM 13017 / BCRC 16820 / KCTC 9966 / NRRL B-24157 / PYR-1) (Mycobacterium vanbaalenii) protein is Acetate kinase.